The chain runs to 453 residues: Tol-Pal system protein TolB (453 aa).

Residues 1–34 form the signal peptide; that stretch reads MYLIIKKTHKLPHWLQKVSLSIMLIIFLWKPALL.

Belongs to the TolB family. In terms of assembly, the Tol-Pal system is composed of five core proteins: the inner membrane proteins TolA, TolQ and TolR, the periplasmic protein TolB and the outer membrane protein Pal. They form a network linking the inner and outer membranes and the peptidoglycan layer.

The protein resides in the periplasm. Its function is as follows. Part of the Tol-Pal system, which plays a role in outer membrane invagination during cell division and is important for maintaining outer membrane integrity. TolB occupies a key intermediary position in the Tol-Pal system because it communicates directly with both membrane-embedded components, Pal in the outer membrane and TolA in the inner membrane. In Blochmanniella pennsylvanica (strain BPEN), this protein is Tol-Pal system protein TolB.